The chain runs to 683 residues: MPLLSQMQEYQADTTFAQLEALRQKLREYEYHYHVLDNPLVPDAEYDRLMNELKNLEWQHPEWITVDSPTQRVGAKPLDGFAQVTHEIPMLSLDNAFSDEELDGFLRRMESYITEDPHTLAFCCEPKLDGLAVSILYVDGVLSQAATRGDGSTGEDITSNIRTIRNIPLKLNMDNPPARLEVRGEVFMPQKGFEELNERALEKGEKTFANPRNAAAGSLRQLDPKITRQRPLVLNAYGIGVYESDDELPATHFERLQWLKSIGIPVNNEIRLATGREQLLAFYANIQAKRPTLGYDIDGTVLKVNDIGLQEQLGFISRSPRWAIAYKFPSQEEMTVLNDVEFQVGRTGAITPVAKLEPVFVAGVTVSNATLHNGDEIERLGIVIGDTVIIRRAGDVIPQIVGVVMDRRPENAKKIEFPTACPVCESAVVRVEGEAVARCTGGLFCGAQRKEALKHFVSRKAMDIDGVGEKLIEQLMERELVHTPADLFKLDHTTLMRLERMGEKSAQNALNSIEKAKNTTLARFLFALGIRDVGEATAQNLANHFHNLAAIRTATFEQLQAVQDVGEVVANRIVRFWQEPHNVAVVEDLISQGVHWQDVIQVEIADNPLKGKNVVLTGTLTQLTRDQAKALLQSFGCKVSGSVSSKTDYLIAGEKAGSKLAKAQELGVKILTEQEFIALTGEN.

Residues 43 to 47 (DAEYD), 92 to 93 (SL), and Glu-125 each bind NAD(+). Residue Lys-127 is the N6-AMP-lysine intermediate of the active site. The NAD(+) site is built by Arg-148, Glu-185, Lys-303, and Lys-327. Residues Cys-421, Cys-424, Cys-439, and Cys-445 each coordinate Zn(2+). Positions 604–683 (IADNPLKGKN…QEFIALTGEN (80 aa)) constitute a BRCT domain.

The protein belongs to the NAD-dependent DNA ligase family. LigA subfamily. It depends on Mg(2+) as a cofactor. Requires Mn(2+) as cofactor.

It carries out the reaction NAD(+) + (deoxyribonucleotide)n-3'-hydroxyl + 5'-phospho-(deoxyribonucleotide)m = (deoxyribonucleotide)n+m + AMP + beta-nicotinamide D-nucleotide.. DNA ligase that catalyzes the formation of phosphodiester linkages between 5'-phosphoryl and 3'-hydroxyl groups in double-stranded DNA using NAD as a coenzyme and as the energy source for the reaction. It is essential for DNA replication and repair of damaged DNA. This Actinobacillus pleuropneumoniae serotype 5b (strain L20) protein is DNA ligase.